A 77-amino-acid polypeptide reads, in one-letter code: Dermatoxin-A1 (77 aa).

Residues 1–22 (MAFLKKSLFLVLFLGLVPLFLC) form the signal peptide. The propeptide occupies 23 to 42 (ENEKREGENEKEENDDQSEE). Residue glutamine 76 is modified to Glutamine amide.

This sequence belongs to the frog skin active peptide (FSAP) family. Dermatoxin subfamily. In terms of tissue distribution, expressed by the skin glands.

It localises to the secreted. Its function is as follows. Possesses a potent antimicrobial activity against Gram-positive and Gram-negative bacteria. Probably acts by disturbing membrane functions with its amphipathic structure. This Agalychnis annae (Blue-sided leaf frog) protein is Dermatoxin-A1.